The chain runs to 369 residues: Tyrosine-protein phosphatase non-receptor type 5 (369 aa).

Phosphoserine; by PKA is present on S49. T59 is subject to Phosphothreonine; by MAPK. S72 bears the Phosphoserine; by MAPK mark. The Tyrosine-protein phosphatase domain maps to 104-359 (LQAEFFEIPM…QFVHHAMSLY (256 aa)). Substrate is bound by residues D265, 300–306 (CSAGIGR), and Q344. C300 functions as the Phosphocysteine intermediate in the catalytic mechanism.

This sequence belongs to the protein-tyrosine phosphatase family. Non-receptor class subfamily. Phosphorylation at Ser-49 by PKA deactivates PTPN5. Phosphorylation at Thr-59 and Ser-72 by MAPKs stabilizes the phosphatase, dephosphorylation of these sites results in ubiquitin-mediated degradation of the active phosphatase. In terms of tissue distribution, expressed in the central nervous system except in the cerebellum. Enriched within the striatum relative to other brain areas.

It is found in the cytoplasm. It catalyses the reaction O-phospho-L-tyrosyl-[protein] + H2O = L-tyrosyl-[protein] + phosphate. May regulate the activity of several effector molecules involved in synaptic plasticity and neuronal cell survival, including MAPKs, Src family kinases and NMDA receptors. In Rattus norvegicus (Rat), this protein is Tyrosine-protein phosphatase non-receptor type 5 (Ptpn5).